A 308-amino-acid polypeptide reads, in one-letter code: Porphobilinogen deaminase (308 aa).

At C241 the chain carries S-(dipyrrolylmethanemethyl)cysteine.

This sequence belongs to the HMBS family. As to quaternary structure, monomer. Dipyrromethane serves as cofactor.

The enzyme catalyses 4 porphobilinogen + H2O = hydroxymethylbilane + 4 NH4(+). It functions in the pathway porphyrin-containing compound metabolism; protoporphyrin-IX biosynthesis; coproporphyrinogen-III from 5-aminolevulinate: step 2/4. Tetrapolymerization of the monopyrrole PBG into the hydroxymethylbilane pre-uroporphyrinogen in several discrete steps. The sequence is that of Porphobilinogen deaminase from Staphylococcus saprophyticus subsp. saprophyticus (strain ATCC 15305 / DSM 20229 / NCIMB 8711 / NCTC 7292 / S-41).